The sequence spans 556 residues: Potassium-transporting ATPase potassium-binding subunit (556 aa).

The next 12 membrane-spanning stretches (helical) occupy residues 3-23 (AHGV…TPIL), 57-77 (AAYA…LYAL), 129-149 (GLTV…VALM), 172-192 (LGLL…QGVP), 247-267 (LVNL…TNTF), 278-298 (WALL…AWWA), 319-339 (LGVA…CGAV), 346-366 (LLPL…VVVG), 371-391 (GLYG…LMVG), 408-428 (LAVI…GLAI), 486-506 (FVVM…MAVP), and 516-536 (GWLF…LTYF).

The protein belongs to the KdpA family. The system is composed of three essential subunits: KdpA, KdpB and KdpC.

The protein resides in the cell inner membrane. In terms of biological role, part of the high-affinity ATP-driven potassium transport (or Kdp) system, which catalyzes the hydrolysis of ATP coupled with the electrogenic transport of potassium into the cytoplasm. This subunit binds the periplasmic potassium ions and delivers the ions to the membrane domain of KdpB through an intramembrane tunnel. The polypeptide is Potassium-transporting ATPase potassium-binding subunit (Paramagnetospirillum magneticum (strain ATCC 700264 / AMB-1) (Magnetospirillum magneticum)).